The sequence spans 517 residues: Succinyl-CoA:3-ketoacid coenzyme A transferase 2, mitochondrial (517 aa).

Residues 1–39 constitute a mitochondrion transit peptide; the sequence is MAALRLLASVLGRGVPAGGSGLALSQGCARCFATSPRLR. Residue Glu341 is the 5-glutamyl coenzyme A thioester intermediate of the active site.

It belongs to the 3-oxoacid CoA-transferase family. Homodimer. In terms of tissue distribution, testis specific.

The protein resides in the mitochondrion. The enzyme catalyses a 3-oxo acid + succinyl-CoA = a 3-oxoacyl-CoA + succinate. Its pathway is ketone metabolism; succinyl-CoA degradation; acetoacetyl-CoA from succinyl-CoA: step 1/1. Functionally, key enzyme for ketone body catabolism. Transfers the CoA moiety from succinate to acetoacetate. Formation of the enzyme-CoA intermediate proceeds via an unstable anhydride species formed between the carboxylate groups of the enzyme and substrate. In Homo sapiens (Human), this protein is Succinyl-CoA:3-ketoacid coenzyme A transferase 2, mitochondrial (OXCT2).